The chain runs to 602 residues: NADH-quinone oxidoreductase subunit C/D (602 aa).

An NADH dehydrogenase I subunit C region spans residues 1 to 192 (MVNNMTDLTA…DPFELTKAKQ (192 aa)). The interval 216–602 (DFMFLNLGPN…IDFVMSDVDR (387 aa)) is NADH dehydrogenase I subunit D.

The protein in the N-terminal section; belongs to the complex I 30 kDa subunit family. In the C-terminal section; belongs to the complex I 49 kDa subunit family. In terms of assembly, NDH-1 is composed of 13 different subunits. Subunits NuoB, CD, E, F, and G constitute the peripheral sector of the complex.

It is found in the cell inner membrane. It carries out the reaction a quinone + NADH + 5 H(+)(in) = a quinol + NAD(+) + 4 H(+)(out). Its function is as follows. NDH-1 shuttles electrons from NADH, via FMN and iron-sulfur (Fe-S) centers, to quinones in the respiratory chain. The immediate electron acceptor for the enzyme in this species is believed to be ubiquinone. Couples the redox reaction to proton translocation (for every two electrons transferred, four hydrogen ions are translocated across the cytoplasmic membrane), and thus conserves the redox energy in a proton gradient. This Klebsiella pneumoniae subsp. pneumoniae (strain ATCC 700721 / MGH 78578) protein is NADH-quinone oxidoreductase subunit C/D.